The primary structure comprises 111 residues: Large ribosomal subunit protein uL22 (111 aa).

Belongs to the universal ribosomal protein uL22 family. In terms of assembly, part of the 50S ribosomal subunit.

This protein binds specifically to 23S rRNA; its binding is stimulated by other ribosomal proteins, e.g. L4, L17, and L20. It is important during the early stages of 50S assembly. It makes multiple contacts with different domains of the 23S rRNA in the assembled 50S subunit and ribosome. Its function is as follows. The globular domain of the protein is located near the polypeptide exit tunnel on the outside of the subunit, while an extended beta-hairpin is found that lines the wall of the exit tunnel in the center of the 70S ribosome. The polypeptide is Large ribosomal subunit protein uL22 (Clostridium perfringens (strain ATCC 13124 / DSM 756 / JCM 1290 / NCIMB 6125 / NCTC 8237 / Type A)).